The primary structure comprises 283 residues: Mitochondrial outer membrane protein porin (283 aa).

Belongs to the eukaryotic mitochondrial porin family.

Its subcellular location is the mitochondrion outer membrane. Forms a channel through the cell membrane that allows diffusion of small hydrophilic molecules. The channel adopts an open conformation at low or zero membrane potential and a closed conformation at potentials above 30-40 mV. The open state has a weak anion selectivity whereas the closed state is cation-selective. In Neurospora crassa (strain ATCC 24698 / 74-OR23-1A / CBS 708.71 / DSM 1257 / FGSC 987), this protein is Mitochondrial outer membrane protein porin.